Reading from the N-terminus, the 123-residue chain is Galanin peptides (123 aa).

The N-terminal stretch at 1-19 (MPRGCALLLASLLLASALS) is a signal peptide. Positions 20–30 (ATLGLGSPVKE) are excised as a propeptide. Alanine 61 is modified (alanine amide). Phosphoserine occurs at positions 116 and 117.

Belongs to the galanin family.

Its subcellular location is the secreted. Endocrine hormone of the central and peripheral nervous systems that binds and activates the G protein-coupled receptors GALR1, GALR2, and GALR3. This small neuropeptide may regulate diverse physiologic functions including contraction of smooth muscle of the gastrointestinal and genitourinary tract, growth hormone and insulin release and adrenal secretion. In Sus scrofa (Pig), this protein is Galanin peptides (GAL).